A 1482-amino-acid polypeptide reads, in one-letter code: Chromosome partition protein MukB (1482 aa).

34–41 (GGNGAGKS) serves as a coordination point for ATP. Coiled coils occupy residues 326–416 (LEAD…AIQY), 509–603 (RHLA…RAPV), 780–805 (RAAR…ATLS), 835–923 (EAEI…AKLE), 979–1116 (LSGN…AKAG), and 1210–1265 (EAIE…LQSV). Residues 666–783 (PGGAEDSRLN…TLPLFGRAAR (118 aa)) are flexible hinge.

This sequence belongs to the SMC family. MukB subfamily. As to quaternary structure, homodimerization via its hinge domain. Binds to DNA via its C-terminal region. Interacts, and probably forms a ternary complex, with MukE and MukF via its C-terminal region. The complex formation is stimulated by calcium or magnesium. Interacts with tubulin-related protein FtsZ.

The protein resides in the cytoplasm. It is found in the nucleoid. Plays a central role in chromosome condensation, segregation and cell cycle progression. Functions as a homodimer, which is essential for chromosome partition. Involved in negative DNA supercoiling in vivo, and by this means organize and compact chromosomes. May achieve or facilitate chromosome segregation by condensation DNA from both sides of a centrally located replisome during cell division. The sequence is that of Chromosome partition protein MukB from Enterobacter sp. (strain 638).